Here is a 1451-residue protein sequence, read N- to C-terminus: MGQAASMCRFRGCRYKNKNKSSKQQQQQQQQQQQQQQQHQQQQQQTPSHSPQIQHHSEIIPATTGLHLRSIEEPATTPLQFQPTGRMNTEQGGTGYGGYGSSEHSLLIATRHAGVPLPLAQHQPLPAHYQPLNHSGAAPPSSSNGSSSSGGGVQTSATPQQQQQYQVQQPYQYQYQHHYHHQANSPQHHRPYDPEHARMEAWLDENQEFVQDYFIRKATRQTVDAWLVSHATSAGNDVVSSTSPTHANGQTSSSRGGSGATTPVRKISAHEFERGGLLKPIVNTIDGTPTFLSIGPPMDNGSVGGSCSNLQNVGGVVAGQYQYNHQQHHHNHAHLHHSQHSHYQAGGAVGSSSLGSTGGASGAGGAPSLGGSGGAGNGHQYPYYHCHQRPQRLSRNELKQLDEKELIFELVKDICNELEVRTLCHKILQNVSILLNADRGSLFLVQGRCNGPDGLKKCLVSKLFDVCPRSTVEEMEQQDEVRVAWGTGIAGHVAESGEPVNIPDAYQDERFNCEIDSLTGYRTKALLCMPIKDSSGDVIGVAQVINKMNGECFSEIDEKVFSSYLQFCGIGLRNAQLYEKSQLEIKRNQVLLDLARMIFEEQSTIEHMVFRILTHMQSLIQCQRVQILLVHEADKGSFSRVFDFEANDLSEEEATSRTSPYESRFPINIGITGHVATTGETVNVPNAYEDDRFDASVDENSCFKHRSILCMAIKNSLGQIIGVIQLINKFNELDFTKNDENFVEAFAIFCGMGIHNTHMYEKAIVAMAKQSVTLEVLSYHASATMDEAHRLRRLRVPSAVHFRLHDFKFDDIHFEDDDTLKACLRMFLDLDFVERFHIDYEVLCRWLLSVKKNYRNVTYHNWRHAFNVAQMMFAILTTTQWWKIFGEIECLALIIGCLCHDLDHRGTNNSFQIKASSPLAQLYSTSTMEHHHFDQCLMILNSPGNQILANLSSDDYCRVIRVLEDAILSTDLAVYFKKRGPFLESVSQPTSYWVAEEPRALLRAMSMTVCDLSAITKPWEIEKRVADLVSSEFFEQGDMEKQELNITPIDIMNREKEDELPMMQVNFIDSICLPIYEAFATLSDKLEPLVEGVRDNRGHWIDLADVVKTKTSQDQEPEEEQQQQNVISNGDCKAMSDDDVAASEAEVAVDSPSEKASVNGSNVANNSSNTNKKIAVASHPTSTQPSDDDNDVDADADDVDEQAAEENGHDAEVDEASCRSNSTCSSSTASSCLSTPPPTGEDDSTPVSPLKTLQAKLVAANLNALQRQTSNQAQTQKQRCKSCDHSRSGLQVRKTSSLRGAQELDLDSKTRNGTHAALCKSTPVINNHSHHHNHSHSHNHNHHHHHHHHSHHNHSQHGIGIGSASIGGSGLISLTTPLLAMDSDRIPKIVGKIGNLDGLPFANGIGGPQNGHGLPFGSYQHHHHHQHHHHLLARRHSETNSNGATAMAVEK.

Disordered stretches follow at residues 1–54 (MGQA…PQIQ), 75–100 (ATTP…GGYG), 125–169 (LPAH…QVQQ), 235–262 (GNDV…GATT), and 327–374 (QHHH…GSGG). A compositionally biased stretch (basic residues) spans 11–21 (RGCRYKNKNKS). A compositionally biased stretch (low complexity) spans 24–45 (QQQQQQQQQQQQQQQHQQQQQQ). Residues 77-91 (TPLQFQPTGRMNTEQ) are compositionally biased toward polar residues. Composition is skewed to low complexity over residues 135-147 (SGAA…NGSS) and 160-169 (QQQQQYQVQQ). Positions 235-248 (GNDVVSSTSPTHAN) are enriched in polar residues. Residues 327 to 340 (QHHHNHAHLHHSQH) are compositionally biased toward basic residues. Residues 341–355 (SHYQAGGAVGSSSLG) are compositionally biased toward low complexity. Over residues 356 to 374 (STGGASGAGGAPSLGGSGG) the composition is skewed to gly residues. GAF domains are found at residues 419–572 (EVRT…GIGL) and 604–754 (TIEH…GMGI). The PDEase domain maps to 783–1107 (ATMDEAHRLR…GHWIDLADVV (325 aa)). His-860 acts as the Proton donor in catalysis. The a divalent metal cation site is built by His-864, His-900, Asp-901, and Asp-1011. 4 disordered regions span residues 1109 to 1171 (TKTS…SNTN), 1200 to 1248 (DEQA…TPVS), 1268 to 1305 (QTSN…QELD), and 1325 to 1364 (INNH…IGSA). Low complexity-rich tracts occupy residues 1142-1171 (ASEA…SNTN) and 1218-1234 (CRSN…SCLS). A compositionally biased stretch (polar residues) spans 1268 to 1277 (QTSNQAQTQK). Positions 1328–1355 (HSHHHNHSHSHNHNHHHHHHHHSHHNHS) are enriched in basic residues.

This sequence belongs to the cyclic nucleotide phosphodiesterase family. A divalent metal cation is required as a cofactor. In terms of tissue distribution, in adults, it is enriched in Malpighian tubules.

The enzyme catalyses 3',5'-cyclic GMP + H2O = GMP + H(+). It catalyses the reaction 3',5'-cyclic AMP + H2O = AMP + H(+). Functionally, plays a role in signal transduction by regulating the intracellular concentration of cyclic nucleotides cAMP and cGMP. Dual-specificity phosphodiesterase that catalyzes the hydrolysis of both cAMP and cGMP to 5'-AMP and 5'-GMP, respectively. The polypeptide is Dual 3',5'-cyclic-AMP and -GMP phosphodiesterase 11 (Pde11) (Drosophila melanogaster (Fruit fly)).